Here is a 108-residue protein sequence, read N- to C-terminus: UPF0060 membrane protein Msil_1658 (108 aa).

Transmembrane regions (helical) follow at residues 5 to 25 (LVYV…WAWL), 31 to 51 (SLWL…LTLI), 62 to 82 (AYGG…EGVW), and 88 to 108 (LGGA…PRPA).

Belongs to the UPF0060 family.

It localises to the cell inner membrane. The chain is UPF0060 membrane protein Msil_1658 from Methylocella silvestris (strain DSM 15510 / CIP 108128 / LMG 27833 / NCIMB 13906 / BL2).